Consider the following 149-residue polypeptide: Lymphocyte antigen 6 complex locus protein G5c (149 aa).

Positions 1–41 (MLFMAGPAASWSLRPLGLHGVPQALCAVLLTVLVMKTLVLG) are cleaved as a signal peptide. Residues 59–149 (LNCYRCLLET…NPDNRKNSMH (91 aa)) form the UPAR/Ly6 domain. 5 disulfides stabilise this stretch: cysteine 61/cysteine 88, cysteine 64/cysteine 73, cysteine 80/cysteine 106, cysteine 115/cysteine 132, and cysteine 133/cysteine 138. Residue asparagine 95 is glycosylated (N-linked (GlcNAc...) asparagine).

Forms oligomers. N-glycosylated. In terms of tissue distribution, detected in adult brain.

Its subcellular location is the secreted. Its function is as follows. May have a role in hematopoietic cell differentiation. This is Lymphocyte antigen 6 complex locus protein G5c (Ly6g5c) from Mus musculus (Mouse).